A 938-amino-acid polypeptide reads, in one-letter code: Protein SEY1 (938 aa).

The disordered stretch occupies residues Met-1–Ser-159. Residues Met-1–Gln-839 are Cytoplasmic-facing. The span at Ser-33–Thr-45 shows a compositional bias: low complexity. Pro residues predominate over residues Ile-74 to Ala-94. Positions Leu-100 to Pro-118 are enriched in basic and acidic residues. A compositionally biased stretch (polar residues) spans Val-146–Gly-158. A GB1/RHD3-type G domain is found at Gly-192–Tyr-423. Gly-202 to Ser-209 contributes to the GTP binding site. Positions Ser-603–Leu-630 form a coiled coil. The helical transmembrane segment at Ile-840 to Leu-860 threads the bilayer. Residues Arg-861–Pro-863 lie on the Lumenal side of the membrane. Residues Val-864–Leu-884 form a helical membrane-spanning segment. The Cytoplasmic portion of the chain corresponds to Trp-885–Leu-938. Residues Leu-911–Leu-938 are disordered. Basic and acidic residues predominate over residues Glu-918–Leu-938.

Belongs to the TRAFAC class dynamin-like GTPase superfamily. GB1/RHD3 GTPase family. RHD3 subfamily.

Its subcellular location is the endoplasmic reticulum membrane. Functionally, cooperates with the reticulon proteins and tubule-shaping DP1 family proteins to generate and maintain the structure of the tubular endoplasmic reticulum network. Has GTPase activity, which is required for its function in ER organization. The sequence is that of Protein SEY1 from Yarrowia lipolytica (strain CLIB 122 / E 150) (Yeast).